Consider the following 316-residue polypeptide: Serpentine receptor class gamma-4 (316 aa).

The next 7 membrane-spanning stretches (helical) occupy residues 21 to 41 (FVYL…IWGT), 50 to 70 (SFFT…FLDV), 99 to 121 (IVYP…LSIN), 140 to 160 (MKKV…NVII), 188 to 208 (FQII…SITL), 229 to 249 (TAWI…FAFF), and 258 to 278 (IFYI…PIVM).

It belongs to the nematode receptor-like protein srg family.

The protein resides in the membrane. In Caenorhabditis elegans, this protein is Serpentine receptor class gamma-4 (srg-4).